Consider the following 248-residue polypeptide: uncharacterized protein (248 aa).

The 240-residue stretch at 7 to 246 folds into the ABC transporter domain; the sequence is VQLSNLSWTF…PASTILLPTS (240 aa). 43–50 is a binding site for ATP; that stretch reads GQSGSGKS.

The protein belongs to the ABC transporter superfamily.

This is an uncharacterized protein from Mycobacterium tuberculosis (strain CDC 1551 / Oshkosh).